The following is a 141-amino-acid chain: Neuropeptides CP2 (141 aa).

A signal peptide spans 1 to 26; that stretch reads MDSRICTSFARLMASALCVSTLLVTA. The segment at 75–94 is disordered; sequence KVDMPLPRQRTSSRSSERWA. Histidine amide is present on His140.

In terms of tissue distribution, neurons.

The protein localises to the secreted. Functionally, mediates intrinsic neuromodulation. In Aplysia californica (California sea hare), this protein is Neuropeptides CP2 (CP2PP).